Here is a 966-residue protein sequence, read N- to C-terminus: MNPGGEQTIMEQPAQQQQQQQQQQQQQQQQAAVPQQPLDPLTQSTAETWLSIASLAETLGDGDRAAMAYDATLQFNPSSAKALTSLAHLYRSRDMFQRAAELYERALLVNPELSDVWATLGHCYLMLDDLQRAYNAYQQALYHLSNPNVPKLWHGIGILYDRYGSLDYAEEAFAKVLELDPHFEKANEIYFRLGIIYKHQGKWSQALECFRYILPQPPAPLQEWDIWFQLGSVLESMGEWQGAKEAYEHVLAQNQHHAKVLQQLGCLYGMSNVQFYDPQKALDYLLKSLEADPSDATTWYHLGRVHMIRTDYTAAYDAFQQAVNRDSRNPIFWCSIGVLYYQISQYRDALDAYTRAIRLNPYISEVWYDLGTLYETCNNQLSDALDAYKQAARLDVNNVHIRERLEALTKQLENPGNINKSNGAPTNASPAPPPVILQPTLQPNDQGNPLNTRISAQSANATASMVQQQHPAQQTPINSSATMYSNGASPQLQAQAQAQAQAQAQAQAQAQAQAQAQAQAQAQAQAQAQAQAQAQAHAQAQAQAQAQAQAQAQAQAQQQQQQQQQQQQQQQQQQQQQQQQQQQQQQQLQPLPRQQLQQKGVSVQMLNPQQGQPYITQPTVIQAHQLQPFSTQAMEHPQSSQLPPQQQQLQSVQHPQQLQGQPQAQAPQPLIQHNVEQNVLPQKRYMEGAIHTLVDAAVSSSTHTENNTKSPRQPTHAIPTQAPATGITNAEPQVKKQKLNSPNSNINKLVNTATSIEENAKSEVSNQSPAVVESNTNNTSQEEKPVKANSIPSVIGAQEPPQEASPAEEATKAASVSPSTKPLNTEPESSSVQPTVSSESSTTKANDQSTAETIELSTATVPAEASPVEDEVRQHSKEENGTTEASAPSTEEAEPAASRDAEKQQDETAATTITVIKPTLETMETVKEEAKMREEEQTSQEKSPQENTLPRENVVRQVEEDENYDD.

A disordered region spans residues 1 to 37 (MNPGGEQTIMEQPAQQQQQQQQQQQQQQQQAAVPQQP). Residues 12-36 (QPAQQQQQQQQQQQQQQQQAAVPQQ) show a composition bias toward low complexity. 10 TPR repeats span residues 46–79 (AETW…NPSS), 80–113 (AKAL…NPEL), 114–147 (SDVW…LSNP), 150–183 (PKLW…DPHF), 187–220 (NEIY…PPAP), 224–257 (WDIW…NQHH), 262–295 (QQLG…DPSD), 296–329 (ATTW…DSRN), 330–363 (PIFW…NPYI), and 364–398 (SEVW…DVNN). 2 stretches are compositionally biased toward polar residues: residues 412–429 (LENP…TNAS) and 439–489 (PTLQ…NGAS). Disordered regions lie at residues 412–489 (LENP…NGAS), 631–666 (TQAM…QAQA), and 699–723 (SSST…TQAP). Ser429 is modified (phosphoserine). A prion domain (PrD) region spans residues 467-682 (QQQHPAQQTP…HNVEQNVLPQ (216 aa)). Thr475 is modified (phosphothreonine). A compositionally biased stretch (low complexity) spans 637-666 (PQSSQLPPQQQQLQSVQHPQQLQGQPQAQA). The segment covering 699–713 (SSSTHTENNTKSPRQ) has biased composition (polar residues). Ser710, Ser741, and Ser768 each carry phosphoserine. The span at 759–780 (NAKSEVSNQSPAVVESNTNNTS) shows a compositional bias: polar residues. The segment at 759 to 966 (NAKSEVSNQS…QVEEDENYDD (208 aa)) is disordered. Low complexity predominate over residues 797-808 (AQEPPQEASPAE). Over residues 814-823 (ASVSPSTKPL) the composition is skewed to polar residues. Phosphoserine is present on residues Ser815 and Ser817. Residues 826–843 (EPESSSVQPTVSSESSTT) show a composition bias toward low complexity. The segment covering 844–860 (KANDQSTAETIELSTAT) has biased composition (polar residues). A Phosphoserine modification is found at Ser866. Basic and acidic residues predominate over residues 870-880 (DEVRQHSKEEN). A compositionally biased stretch (low complexity) spans 882-896 (TTEASAPSTEEAEPA). 2 stretches are compositionally biased toward basic and acidic residues: residues 897-906 (ASRDAEKQQD) and 924-936 (ETVK…REEE). The segment covering 940–950 (QEKSPQENTLP) has biased composition (polar residues). Position 943 is a phosphoserine (Ser943).

It belongs to the CYC8/SSN6 family. In terms of assembly, associates with TUP1 to form the CYC8-TUP1 (or TUP1-SSN6) corepressor complex that is composed of 4 copies of TUP1 and one copy of CYC8. Interacts with MATALPHA2, CTI6, MIG1, TUP1, SUT1, RFX1, PGD1, HOS1, HOS2 and RPD3.

It is found in the nucleus. Functionally, acts as a component of the CYC8-TUP1 corepressor complex which is involved in the repression of many genes in a wide variety of physiological processes including heme-regulated and catabolite repressed genes. May also be involved in the derepression of at least some target genes. The complex is recruited to target genes by interaction with DNA-bound transcriptional repressors, like MATALPHA2, MIG1, RFX1 and SKO1. The complex recruits histone deacetylases to produce a repressive chromatin structure, interacts with hypoacetylated N-terminal tails of histones H3 and H4 that have been programmed for repression by the action of histone deacetylases and interferes directly with the transcriptional machinery by associating with the RNA polymerase II mediator complex. This chain is General transcriptional corepressor CYC8 (CYC8), found in Saccharomyces cerevisiae (strain ATCC 204508 / S288c) (Baker's yeast).